Consider the following 100-residue polypeptide: NAD(P)H-quinone oxidoreductase subunit 4L, chloroplastic (100 aa).

3 consecutive transmembrane segments (helical) span residues 1–21, 27–47, and 61–81; these read MIEN…YGLI, IKVL…LVAF, and FAVF…AIVF.

It belongs to the complex I subunit 4L family. As to quaternary structure, NDH is composed of at least 16 different subunits, 5 of which are encoded in the nucleus.

It localises to the plastid. It is found in the chloroplast thylakoid membrane. The catalysed reaction is a plastoquinone + NADH + (n+1) H(+)(in) = a plastoquinol + NAD(+) + n H(+)(out). It carries out the reaction a plastoquinone + NADPH + (n+1) H(+)(in) = a plastoquinol + NADP(+) + n H(+)(out). Its function is as follows. NDH shuttles electrons from NAD(P)H:plastoquinone, via FMN and iron-sulfur (Fe-S) centers, to quinones in the photosynthetic chain and possibly in a chloroplast respiratory chain. The immediate electron acceptor for the enzyme in this species is believed to be plastoquinone. Couples the redox reaction to proton translocation, and thus conserves the redox energy in a proton gradient. The sequence is that of NAD(P)H-quinone oxidoreductase subunit 4L, chloroplastic from Chaetosphaeridium globosum (Charophycean green alga).